We begin with the raw amino-acid sequence, 104 residues long: A-type ATP synthase subunit F (104 aa).

Belongs to the V-ATPase F subunit family. As to quaternary structure, has multiple subunits with at least A(3), B(3), C, D, E, F, H, I and proteolipid K(x).

It is found in the cell membrane. Its function is as follows. Component of the A-type ATP synthase that produces ATP from ADP in the presence of a proton gradient across the membrane. This chain is A-type ATP synthase subunit F, found in Thermoplasma volcanium (strain ATCC 51530 / DSM 4299 / JCM 9571 / NBRC 15438 / GSS1).